Reading from the N-terminus, the 561-residue chain is Lysine--tRNA ligase (561 aa).

The Mg(2+) site is built by E409 and E416.

It belongs to the class-II aminoacyl-tRNA synthetase family. In terms of assembly, homodimer. Mg(2+) serves as cofactor.

Its subcellular location is the cytoplasm. It catalyses the reaction tRNA(Lys) + L-lysine + ATP = L-lysyl-tRNA(Lys) + AMP + diphosphate. The polypeptide is Lysine--tRNA ligase (Nostoc punctiforme (strain ATCC 29133 / PCC 73102)).